Here is a 320-residue protein sequence, read N- to C-terminus: Cytochrome f (320 aa).

Residues 1-35 (MQTRNNFSWIKEQITRSISVSLMIYIITRASISNA) form the signal peptide. Positions 36, 56, 59, and 60 each coordinate heme. A helical membrane pass occupies residues 286 to 306 (VQGLLFFLASVILAQIFLVLK).

Belongs to the cytochrome f family. The 4 large subunits of the cytochrome b6-f complex are cytochrome b6, subunit IV (17 kDa polypeptide, petD), cytochrome f and the Rieske protein, while the 4 small subunits are PetG, PetL, PetM and PetN. The complex functions as a dimer. The cofactor is heme.

It is found in the plastid. The protein resides in the chloroplast thylakoid membrane. In terms of biological role, component of the cytochrome b6-f complex, which mediates electron transfer between photosystem II (PSII) and photosystem I (PSI), cyclic electron flow around PSI, and state transitions. This chain is Cytochrome f, found in Lactuca sativa (Garden lettuce).